A 40-amino-acid chain; its full sequence is Dolichyl-diphosphooligosaccharide--protein glycosyltransferase subunit 4 (40 aa).

Topologically, residues 1–4 are lumenal; that stretch reads MITD. Residues 5–25 form a helical membrane-spanning segment; that stretch reads VQLAIFSNVLGVFLFLLVVAY. Residues 26 to 40 lie on the Cytoplasmic side of the membrane; that stretch reads HYINANTGKSSPKAK.

Belongs to the OST4 family. As to quaternary structure, component of the oligosaccharyltransferase (OST) complex.

The protein resides in the endoplasmic reticulum membrane. Functionally, subunit of the oligosaccharyl transferase (OST) complex that catalyzes the initial transfer of a defined glycan (Glc(3)Man(9)GlcNAc(2) in eukaryotes) from the lipid carrier dolichol-pyrophosphate to an asparagine residue within an Asn-X-Ser/Thr consensus motif in nascent polypeptide chains, the first step in protein N-glycosylation. N-glycosylation occurs cotranslationally and the complex associates with the Sec61 complex at the channel-forming translocon complex that mediates protein translocation across the endoplasmic reticulum (ER). All subunits are required for a maximal enzyme activity. This Drosophila persimilis (Fruit fly) protein is Dolichyl-diphosphooligosaccharide--protein glycosyltransferase subunit 4.